A 528-amino-acid polypeptide reads, in one-letter code: Lanosterol 14-alpha demethylase (528 aa).

Cysteine 470 provides a ligand contact to heme.

This sequence belongs to the cytochrome P450 family. Heme is required as a cofactor.

The protein resides in the membrane. The catalysed reaction is a 14alpha-methyl steroid + 3 reduced [NADPH--hemoprotein reductase] + 3 O2 = a Delta(14) steroid + formate + 3 oxidized [NADPH--hemoprotein reductase] + 4 H2O + 4 H(+). It catalyses the reaction a 14alpha-methyl steroid + reduced [NADPH--hemoprotein reductase] + O2 = a 14alpha-hydroxymethyl steroid + oxidized [NADPH--hemoprotein reductase] + H2O + H(+). It carries out the reaction a 14alpha-hydroxymethyl steroid + reduced [NADPH--hemoprotein reductase] + O2 = a 14alpha-formyl steroid + oxidized [NADPH--hemoprotein reductase] + 2 H2O + H(+). The enzyme catalyses a 14alpha-formyl steroid + reduced [NADPH--hemoprotein reductase] + O2 = a Delta(14) steroid + formate + oxidized [NADPH--hemoprotein reductase] + H2O + 2 H(+). The catalysed reaction is lanosterol + 3 reduced [NADPH--hemoprotein reductase] + 3 O2 = 4,4-dimethyl-5alpha-cholesta-8,14,24-trien-3beta-ol + formate + 3 oxidized [NADPH--hemoprotein reductase] + 4 H2O + 4 H(+). It catalyses the reaction lanosterol + reduced [NADPH--hemoprotein reductase] + O2 = 32-hydroxylanosterol + oxidized [NADPH--hemoprotein reductase] + H2O + H(+). It carries out the reaction 32-hydroxylanosterol + reduced [NADPH--hemoprotein reductase] + O2 = 32-oxolanosterol + oxidized [NADPH--hemoprotein reductase] + 2 H2O + H(+). The enzyme catalyses 32-oxolanosterol + reduced [NADPH--hemoprotein reductase] + O2 = 4,4-dimethyl-5alpha-cholesta-8,14,24-trien-3beta-ol + formate + oxidized [NADPH--hemoprotein reductase] + H2O + 2 H(+). The catalysed reaction is eburicol + 3 reduced [NADPH--hemoprotein reductase] + 3 O2 = 14-demethyleburicol + formate + 3 oxidized [NADPH--hemoprotein reductase] + 4 H2O + 4 H(+). It catalyses the reaction eburicol + reduced [NADPH--hemoprotein reductase] + O2 = 32-hydroxyeburicol + oxidized [NADPH--hemoprotein reductase] + H2O + H(+). It carries out the reaction 32-hydroxyeburicol + reduced [NADPH--hemoprotein reductase] + O2 = 32-oxoeburicol + oxidized [NADPH--hemoprotein reductase] + 2 H2O + H(+). The enzyme catalyses 32-oxoeburicol + reduced [NADPH--hemoprotein reductase] + O2 = 14-demethyleburicol + formate + oxidized [NADPH--hemoprotein reductase] + H2O + 2 H(+). Its pathway is steroid biosynthesis; zymosterol biosynthesis; zymosterol from lanosterol: step 1/6. Its function is as follows. Sterol 14alpha-demethylase that plays a critical role in the third module of ergosterol biosynthesis pathway, being ergosterol the major sterol component in fungal membranes that participates in a variety of functions. The third module or late pathway involves the ergosterol synthesis itself through consecutive reactions that mainly occur in the endoplasmic reticulum (ER) membrane. In filamentous fungi, during the initial step of this module, lanosterol (lanosta-8,24-dien-3beta-ol) can be metabolized to eburicol. Sterol 14alpha-demethylase catalyzes the three-step oxidative removal of the 14alpha-methyl group (C-32) of both these sterols in the form of formate, and converts eburicol and lanosterol to 14-demethyleburicol (4,4,24-trimethylergosta-8,14,24(28)-trienol) and 4,4-dimethyl-5alpha-cholesta-8,14,24-trien-3beta-ol, respectively, which are further metabolized by other enzymes in the pathway to ergosterol. Can also use substrates not intrinsic to fungi, such as 24,25-dihydrolanosterol (DHL), producing 4,4-dimethyl-8,14-cholestadien-3-beta-ol, but at lower rates than the endogenous substrates. This is Lanosterol 14-alpha demethylase (ERG11) from Candida tropicalis (Yeast).